Reading from the N-terminus, the 332-residue chain is L-lactate dehydrogenase A chain (332 aa).

NAD(+)-binding positions include 29–57 (GAVG…IEDK) and Arg99. Residues Arg106, Asn138, and Arg169 each contribute to the substrate site. An NAD(+)-binding site is contributed by Asn138. Residue His193 is the Proton acceptor of the active site. Position 248 (Thr248) interacts with substrate.

This sequence belongs to the LDH/MDH superfamily. LDH family. Homotetramer.

It localises to the cytoplasm. The catalysed reaction is (S)-lactate + NAD(+) = pyruvate + NADH + H(+). The protein operates within fermentation; pyruvate fermentation to lactate; (S)-lactate from pyruvate: step 1/1. In terms of biological role, interconverts simultaneously and stereospecifically pyruvate and lactate with concomitant interconversion of NADH and NAD(+). The polypeptide is L-lactate dehydrogenase A chain (LDHA) (Trachemys scripta elegans (Red-eared slider turtle)).